The primary structure comprises 120 residues: Eukaryotic translation initiation factor 4E-binding protein 2 (120 aa).

Phosphothreonine; by MTOR is present on residues Thr-37 and Thr-46. Residues 54–60 (YDRKFLL) carry the YXXXXLphi motif motif. Ser-65 is modified (phosphoserine; by MTOR). Thr-70 carries the phosphothreonine; by MTOR modification. At Ser-83 the chain carries Phosphoserine. A deamidated asparagine mark is found at Asn-99 and Asn-102. Positions 116–120 (FEMDI) match the TOS motif motif.

This sequence belongs to the eIF4E-binding protein family. As to quaternary structure, hypophosphorylated EIF4EBP2 interacts with EIF4E; phosphorylation of EIF4EBP2 by mTORC1 causes dissociation of the complex allowing EIF4G1/EIF4G3 to bind and consequent initiation of translation. Interacts (via TOS motif) with RPTOR; promoting phosphorylation by mTORC1. Interacts with PCMT1; required to prevent isoaspartate accumulation and convert isoaspartate to Asp. Post-translationally, phosphorylation at Thr-37, Thr-46, Ser-65, Thr-70 and Ser-83 is mediated by MTOR and corresponds to the hyperphosphorylated form: it abolishes binding to EIF4E by inducing folding of intrinsically disordered regions. First phosphorylated at Thr-37 and Thr-46 by MTOR, inducing folding of region encompassing residues from Pro-18 to Arg-62 of into a four-stranded beta-domain that sequesters the helical YXXXXLPhi motif into a partly buried beta-strand, blocking accessibility to EIF4E. Protein phosphorylated at Thr-37 and Thr-46 is however unstable and subsequent phosphorylation at Ser-65, Thr-70 and Ser-83 is required to stabilize the fold, decreasing affinity for EIF4E by a factor of 4000. Phosphorylated in response to insulin, EGF and PDGF. Deamidated at Asn-99 and Asn-102 to aspartate (Asp) in brain. Deamidation promotes interaction with RPTOR, subsequent phosphorylation by mTORC1 and increased translation, leading to impair kinetics of excitatory synaptic transmission. Deamidation takes place during postnatal development, when the PI3K-Akt-mTOR signaling is reduced, suggesting it acts as a compensatory mechanism to promote translation despite attenuated PI3K-Akt-mTOR signaling in neuron development. Deamidation converts Asn residues into a mixture of Asp and isoaspartate; interactions with PCMT1 is required to prevent isoaspartate accumulation and convert isoaspartate to Asp. In terms of tissue distribution, enriched in brain.

It is found in the cytoplasm. Its subcellular location is the nucleus. In terms of biological role, repressor of translation initiation involved in synaptic plasticity, learning and memory formation. Regulates EIF4E activity by preventing its assembly into the eIF4F complex: hypophosphorylated form of EIF4EBP2 competes with EIF4G1/EIF4G3 and strongly binds to EIF4E, leading to repress translation. In contrast, hyperphosphorylated form dissociates from EIF4E, allowing interaction between EIF4G1/EIF4G3 and EIF4E, leading to initiation of translation. EIF4EBP2 is enriched in brain and acts as a regulator of synapse activity and neuronal stem cell renewal via its ability to repress translation initiation. Mediates the regulation of protein translation by hormones, growth factors and other stimuli that signal through the MAP kinase and mTORC1 pathways. This is Eukaryotic translation initiation factor 4E-binding protein 2 from Mus musculus (Mouse).